Reading from the N-terminus, the 345-residue chain is NADH-ubiquinone oxidoreductase chain 2 (345 aa).

Transmembrane regions (helical) follow at residues 25–45 (HWLL…PLMT), 60–80 (FLTQ…NAWL), 99–119 (TIAI…PEVL), 149–171 (LNTP…GGLN), 178–198 (ILAF…PFSP), 199–219 (QLMI…FLVL), 242–262 (ALSL…GFVP), 282–302 (LALS…IVTL), and 324–344 (LLLS…PLTL).

It belongs to the complex I subunit 2 family. Core subunit of respiratory chain NADH dehydrogenase (Complex I) which is composed of 45 different subunits.

The protein localises to the mitochondrion inner membrane. The catalysed reaction is a ubiquinone + NADH + 5 H(+)(in) = a ubiquinol + NAD(+) + 4 H(+)(out). Its function is as follows. Core subunit of the mitochondrial membrane respiratory chain NADH dehydrogenase (Complex I) which catalyzes electron transfer from NADH through the respiratory chain, using ubiquinone as an electron acceptor. Essential for the catalytic activity and assembly of complex I. The polypeptide is NADH-ubiquinone oxidoreductase chain 2 (mt-nd2) (Xenopus laevis (African clawed frog)).